A 212-amino-acid polypeptide reads, in one-letter code: Imidazole glycerol phosphate synthase subunit HisH (212 aa).

One can recognise a Glutamine amidotransferase type-1 domain in the interval 1–211 (MIGVIDYGMG…TKMAAEQQVK (211 aa)). C79 (nucleophile) is an active-site residue. Catalysis depends on residues H186 and E188.

Heterodimer of HisH and HisF.

It localises to the cytoplasm. The catalysed reaction is 5-[(5-phospho-1-deoxy-D-ribulos-1-ylimino)methylamino]-1-(5-phospho-beta-D-ribosyl)imidazole-4-carboxamide + L-glutamine = D-erythro-1-(imidazol-4-yl)glycerol 3-phosphate + 5-amino-1-(5-phospho-beta-D-ribosyl)imidazole-4-carboxamide + L-glutamate + H(+). It carries out the reaction L-glutamine + H2O = L-glutamate + NH4(+). The protein operates within amino-acid biosynthesis; L-histidine biosynthesis; L-histidine from 5-phospho-alpha-D-ribose 1-diphosphate: step 5/9. Its function is as follows. IGPS catalyzes the conversion of PRFAR and glutamine to IGP, AICAR and glutamate. The HisH subunit catalyzes the hydrolysis of glutamine to glutamate and ammonia as part of the synthesis of IGP and AICAR. The resulting ammonia molecule is channeled to the active site of HisF. In Bacillus velezensis (strain DSM 23117 / BGSC 10A6 / LMG 26770 / FZB42) (Bacillus amyloliquefaciens subsp. plantarum), this protein is Imidazole glycerol phosphate synthase subunit HisH.